The sequence spans 750 residues: Glutathione biosynthesis bifunctional protein GshAB (750 aa).

A glutamate--cysteine ligase region spans residues 1-333; the sequence is MIIDRLLQRS…EANRLNDLIA (333 aa). The disordered stretch occupies residues 32–51; that stretch reads QPTQRVAQTPHPKTLGSRNY. Positions 489–747 constitute an ATP-grasp domain; sequence KKILDEKHFP…ITPRILAKLF (259 aa). 516–574 is a binding site for ATP; sequence SQIQDKPIVVKPKSTNFGLGISIFKTSANLASYEKAIDIAFTEDSAILVEEYIEGTEYR. 3 residues coordinate Mg(2+): Asp696, Glu717, and Asn719. The Mn(2+) site is built by Asp696, Glu717, and Asn719.

In the N-terminal section; belongs to the glutamate--cysteine ligase type 1 family. Type 2 subfamily. In terms of assembly, monomer. Requires Mg(2+) as cofactor. The cofactor is Mn(2+).

It catalyses the reaction L-cysteine + L-glutamate + ATP = gamma-L-glutamyl-L-cysteine + ADP + phosphate + H(+). The catalysed reaction is gamma-L-glutamyl-L-cysteine + glycine + ATP = glutathione + ADP + phosphate + H(+). The protein operates within sulfur metabolism; glutathione biosynthesis; glutathione from L-cysteine and L-glutamate: step 1/2. It functions in the pathway sulfur metabolism; glutathione biosynthesis; glutathione from L-cysteine and L-glutamate: step 2/2. In terms of biological role, synthesizes glutathione from L-glutamate and L-cysteine via gamma-L-glutamyl-L-cysteine. The protein is Glutathione biosynthesis bifunctional protein GshAB of Streptococcus agalactiae serotype III (strain NEM316).